The primary structure comprises 126 residues: Aspartate 1-decarboxylase (126 aa).

Residue Ser-25 is the Schiff-base intermediate with substrate; via pyruvic acid of the active site. Ser-25 bears the Pyruvic acid (Ser) mark. Thr-57 contacts substrate. Catalysis depends on Tyr-58, which acts as the Proton donor. 73–75 is a substrate binding site; the sequence is GGA.

The protein belongs to the PanD family. In terms of assembly, heterooctamer of four alpha and four beta subunits. It depends on pyruvate as a cofactor. In terms of processing, is synthesized initially as an inactive proenzyme, which is activated by self-cleavage at a specific serine bond to produce a beta-subunit with a hydroxyl group at its C-terminus and an alpha-subunit with a pyruvoyl group at its N-terminus.

It is found in the cytoplasm. The enzyme catalyses L-aspartate + H(+) = beta-alanine + CO2. The protein operates within cofactor biosynthesis; (R)-pantothenate biosynthesis; beta-alanine from L-aspartate: step 1/1. Catalyzes the pyruvoyl-dependent decarboxylation of aspartate to produce beta-alanine. The polypeptide is Aspartate 1-decarboxylase (Xanthomonas oryzae pv. oryzae (strain MAFF 311018)).